The primary structure comprises 400 residues: Formate-dependent phosphoribosylglycinamide formyltransferase (400 aa).

Residues 22-23 and E82 contribute to the N(1)-(5-phospho-beta-D-ribosyl)glycinamide site; that span reads EL. Residues R115, K157, 162–167, 197–200, and E205 each bind ATP; these read SSGKGQ and EGFV. Positions 120–315 constitute an ATP-grasp domain; the sequence is RLAAETLGVP…EFELHARAIL (196 aa). The Mg(2+) site is built by E274 and E286. N(1)-(5-phospho-beta-D-ribosyl)glycinamide is bound by residues D293, K362, and 369 to 370; that span reads RR.

Belongs to the PurK/PurT family. In terms of assembly, homodimer.

It carries out the reaction N(1)-(5-phospho-beta-D-ribosyl)glycinamide + formate + ATP = N(2)-formyl-N(1)-(5-phospho-beta-D-ribosyl)glycinamide + ADP + phosphate + H(+). It participates in purine metabolism; IMP biosynthesis via de novo pathway; N(2)-formyl-N(1)-(5-phospho-D-ribosyl)glycinamide from N(1)-(5-phospho-D-ribosyl)glycinamide (formate route): step 1/1. Functionally, involved in the de novo purine biosynthesis. Catalyzes the transfer of formate to 5-phospho-ribosyl-glycinamide (GAR), producing 5-phospho-ribosyl-N-formylglycinamide (FGAR). Formate is provided by PurU via hydrolysis of 10-formyl-tetrahydrofolate. The sequence is that of Formate-dependent phosphoribosylglycinamide formyltransferase from Mycolicibacterium smegmatis (strain ATCC 700084 / mc(2)155) (Mycobacterium smegmatis).